Consider the following 323-residue polypeptide: tRNA U34 carboxymethyltransferase (323 aa).

Carboxy-S-adenosyl-L-methionine contacts are provided by residues lysine 91, tryptophan 105, lysine 110, glycine 130, 181–182 (IE), methionine 196, tyrosine 200, and arginine 315.

This sequence belongs to the class I-like SAM-binding methyltransferase superfamily. CmoB family. In terms of assembly, homotetramer.

The enzyme catalyses carboxy-S-adenosyl-L-methionine + 5-hydroxyuridine(34) in tRNA = 5-carboxymethoxyuridine(34) in tRNA + S-adenosyl-L-homocysteine + H(+). Its function is as follows. Catalyzes carboxymethyl transfer from carboxy-S-adenosyl-L-methionine (Cx-SAM) to 5-hydroxyuridine (ho5U) to form 5-carboxymethoxyuridine (cmo5U) at position 34 in tRNAs. This Sodalis glossinidius (strain morsitans) protein is tRNA U34 carboxymethyltransferase.